We begin with the raw amino-acid sequence, 114 residues long: KPKEDKEWEKFKVKHITSQSVADFNCTSTMNNPDFTPDGQCKPINTFIHSNTGPVKEICRRASGRVNKSSTQQFPLTTCKNPKRCKYSQSNETNYICITCRDNYPVHFVKIGKC.

The active-site Proton acceptor is the His15. Residue Asn25 is glycosylated (N-linked (GlcNAc...) asparagine). 4 cysteine pairs are disulfide-bonded: Cys26–Cys79, Cys41–Cys85, Cys59–Cys100, and Cys97–Cys114. Residue 42 to 46 participates in substrate binding; the sequence is KPINT. N-linked (GlcNAc...) asparagine glycosylation is found at Asn67 and Asn91. His107 (proton donor) is an active-site residue.

This sequence belongs to the pancreatic ribonuclease family. As to quaternary structure, monomer. There are at least five different forms arising from glycan heterogeneity.

Its subcellular location is the secreted. In terms of biological role, endonuclease, hydrolyzes highly polymerized RNA, poly(U) and poly(C), and the dinucleotides CpA and UpA. More active towards rCA than rUA or rUG. Has cytotoxic activity against cultured human submaxillary gland carcinoma cells. The protein is Amphinase-3 of Lithobates pipiens (Northern leopard frog).